The sequence spans 437 residues: 23S rRNA (uracil(1939)-C(5))-methyltransferase RlmD (437 aa).

Positions 10–68 constitute a TRAM domain; that stretch reads SAPRNTTFVAEILDLDYQGRGVAKVQGKTWFIENALPQEKVEVRIVDEKRHYGHGISCK. [4Fe-4S] cluster contacts are provided by Cys-81, Cys-87, Cys-90, and Cys-167. Gln-270, Phe-299, Asn-304, Glu-320, Asn-347, and Asp-368 together coordinate S-adenosyl-L-methionine. Cys-394 serves as the catalytic Nucleophile.

This sequence belongs to the class I-like SAM-binding methyltransferase superfamily. RNA M5U methyltransferase family. RlmD subfamily.

It carries out the reaction uridine(1939) in 23S rRNA + S-adenosyl-L-methionine = 5-methyluridine(1939) in 23S rRNA + S-adenosyl-L-homocysteine + H(+). Its function is as follows. Catalyzes the formation of 5-methyl-uridine at position 1939 (m5U1939) in 23S rRNA. The chain is 23S rRNA (uracil(1939)-C(5))-methyltransferase RlmD from Pasteurella multocida (strain Pm70).